A 319-amino-acid chain; its full sequence is Ankyrin repeat domain-containing protein 1 (319 aa).

Residues 63-89 (EKEREAELKKKKLEQRSKLENLEDLEI) are a coiled coil. ANK repeat units lie at residues 152 to 181 (YKRT…QIEF), 185 to 214 (LEST…KISA), 218 to 247 (LLST…DLNA), 251 to 280 (EGDT…DLNV), and 284 to 315 (AGKT…KASR).

In terms of assembly, interacts with TTN/titin and YBX1. In terms of tissue distribution, expressed in heart. In postnatal neonatal heart, it is expressed in an asymmetrical way; left ventricle favored towards right ventricle. Whether or not this could be correlated with a hypertrophic heart is still a matter of debate. Levels increase gradually from newborn to adult.

It localises to the nucleus. Its function is as follows. May play an important role in endothelial cell activation. May act as a nuclear transcription factor that negatively regulates the expression of cardiac genes. In Sus scrofa (Pig), this protein is Ankyrin repeat domain-containing protein 1 (ANKRD1).